Consider the following 315-residue polypeptide: Pantothenate synthetase (315 aa).

45 to 52 (MGALHEGH) is an ATP binding site. Residue His-52 is the Proton donor of the active site. Gln-77 contacts (R)-pantoate. Residue Gln-77 participates in beta-alanine binding. 163–166 (GEKD) contacts ATP. Gln-169 provides a ligand contact to (R)-pantoate. ATP contacts are provided by residues Val-192 and 200 to 203 (MSSR).

The protein belongs to the pantothenate synthetase family. As to quaternary structure, homodimer.

It localises to the cytoplasm. The catalysed reaction is (R)-pantoate + beta-alanine + ATP = (R)-pantothenate + AMP + diphosphate + H(+). The protein operates within cofactor biosynthesis; (R)-pantothenate biosynthesis; (R)-pantothenate from (R)-pantoate and beta-alanine: step 1/1. Its function is as follows. Catalyzes the condensation of pantoate with beta-alanine in an ATP-dependent reaction via a pantoyl-adenylate intermediate. The protein is Pantothenate synthetase of Mycobacterium ulcerans (strain Agy99).